Reading from the N-terminus, the 406-residue chain is Arginine deiminase (406 aa).

C396 functions as the Amidino-cysteine intermediate in the catalytic mechanism.

Belongs to the arginine deiminase family.

It is found in the cytoplasm. The catalysed reaction is L-arginine + H2O = L-citrulline + NH4(+). It functions in the pathway amino-acid degradation; L-arginine degradation via ADI pathway; carbamoyl phosphate from L-arginine: step 1/2. The chain is Arginine deiminase from Vibrio vulnificus (strain YJ016).